The following is a 249-amino-acid chain: MELKIDTHSHTYASGHAYSTLIENARSAKENGLAMFCTTDHAESMPGAPHYWFFANQRVLPRFLEGVAILRGVEANILNTEGEIDLPLSVDPNLDWAIASFHEPVFAPSNKEAHTQALLNVIQGGRIDALGHLGNPHFDFDFHAVLHCAKEHNVAIEINNSTLKGHSRVGSVERCYEIARVGKALGVYFTTGSDAHFCQDVGKLDLASELLDSVGIDSHRVITHSPSQFLDFLELRGRGPIDELASLRQ.

Zn(2+) contacts are provided by His8, His10, His16, His41, Glu74, His102, His132, Asp194, and His196.

The protein belongs to the PHP family. Zn(2+) serves as cofactor.

This chain is Probable phosphatase VVA0289, found in Vibrio vulnificus (strain YJ016).